The sequence spans 627 residues: Carene synthase, chloroplastic (627 aa).

The N-terminal 36 residues, M1–L36, are a transit peptide targeting the chloroplast. The Mg(2+) site is built by D378, D382, and D530. Positions D378 to D382 match the DDXXD motif motif.

This sequence belongs to the terpene synthase family. Tpsd subfamily. Requires Mg(2+) as cofactor. Mn(2+) is required as a cofactor.

It localises to the plastid. Its subcellular location is the chloroplast. The catalysed reaction is (2E)-geranyl diphosphate = (+)-car-3-ene + diphosphate. It functions in the pathway terpene metabolism; oleoresin biosynthesis. Its function is as follows. Terpene synthase (TPS) involved in defensive oleoresin formation in conifers in response to insect attack or other injury. The sequence is that of Carene synthase, chloroplastic (JF67) from Picea abies (Norway spruce).